Here is a 216-residue protein sequence, read N- to C-terminus: MNAPRFAAPARRTKKLPPLRVGIGGPVGSGKTTLLEMLCKGMRERYDLVAITNDIYTKEDQRLLTIAGALPEARIMGVETGGCPHTAIREDASINLEAVERMLVRFPDADIVFIESGGDNLAATFSPELSDLTIYVIDVAGGEKIPRKGGPGITKSDLLVINKTDLAPLVGANLEVMASDTRKMRGERPYVMCNLKALDGVADVIAFIENKGLLTV.

Position 25-32 (25-32 (GPVGSGKT)) interacts with GTP.

It belongs to the SIMIBI class G3E GTPase family. UreG subfamily. In terms of assembly, homodimer. UreD, UreF and UreG form a complex that acts as a GTP-hydrolysis-dependent molecular chaperone, activating the urease apoprotein by helping to assemble the nickel containing metallocenter of UreC. The UreE protein probably delivers the nickel.

It localises to the cytoplasm. In terms of biological role, facilitates the functional incorporation of the urease nickel metallocenter. This process requires GTP hydrolysis, probably effectuated by UreG. The polypeptide is Urease accessory protein UreG (Burkholderia pseudomallei (strain 1710b)).